Reading from the N-terminus, the 130-residue chain is kinetoplast-associated protein 2-1 (130 aa).

The propeptide occupies 1–10 (MLRRTVSNFA). A disordered region spans residues 89 to 130 (LTKKWNETKQAQREKAQKAQKKTKSAKSKVKKAAKKSKKSKK). Over residues 92–105 (KWNETKQAQREKAQ) the composition is skewed to basic and acidic residues. Residues 106–130 (KAQKKTKSAKSKVKKAAKKSKKSKK) are compositionally biased toward basic residues.

Belongs to the KAP family. As to quaternary structure, associates with the kinetoplast DNA network.

It is found in the mitochondrion matrix. Its subcellular location is the kinetoplast. Functionally, histone H1-like DNA-binding protein involved in the organization and segregation of kinetoplast DNA (kDNA). The mitochondrial DNA of kinetoplastid protozoa consists of about 5,000 minicircles and 20 to 30 maxicircles. These circular DNAs are held together by catenation into a highly organized compact disk structure referred to as a kinetoplast DNA (kDNA) network. Binds preferentially to a specific fragment of minicircle DNA and is able to compact kDNA networks through DNA charge neutralization and condensation. This Crithidia fasciculata protein is kinetoplast-associated protein 2-1 (KAP2-1).